Here is a 398-residue protein sequence, read N- to C-terminus: Probable aminomethyltransferase (398 aa).

This sequence belongs to the GcvT family. As to quaternary structure, the glycine cleavage system is composed of four proteins: P, T, L and H.

It catalyses the reaction N(6)-[(R)-S(8)-aminomethyldihydrolipoyl]-L-lysyl-[protein] + (6S)-5,6,7,8-tetrahydrofolate = N(6)-[(R)-dihydrolipoyl]-L-lysyl-[protein] + (6R)-5,10-methylene-5,6,7,8-tetrahydrofolate + NH4(+). Its function is as follows. The glycine cleavage system catalyzes the degradation of glycine. The sequence is that of Probable aminomethyltransferase from Pyrococcus horikoshii (strain ATCC 700860 / DSM 12428 / JCM 9974 / NBRC 100139 / OT-3).